Reading from the N-terminus, the 255-residue chain is Uracil-DNA glycosylase (255 aa).

Asp-90 acts as the Proton acceptor in catalysis.

The protein belongs to the uracil-DNA glycosylase (UDG) superfamily. UNG family.

The protein localises to the host nucleus. The enzyme catalyses Hydrolyzes single-stranded DNA or mismatched double-stranded DNA and polynucleotides, releasing free uracil.. Functionally, excises uracil residues from the DNA which can arise as a result of misincorporation of dUMP residues by DNA polymerase or deamination of cytosines. Therefore may reduce deleterious uracil incorporation into the viral genome, particularly in terminally differentiated cells which lack DNA repair enzymes. The protein is Uracil-DNA glycosylase of Equine herpesvirus 2 (strain 86/87) (EHV-2).